Consider the following 87-residue polypeptide: U14-lycotoxin-Ls1b (87 aa).

A signal peptide spans 1 to 20; that stretch reads MNSKVFAVLLLLALSTCVLS. The WAP domain maps to 21–66; the sequence is EKYCPTPRNTSCKKMNIRNNCCRDSDCTSNAFCCAEPCGNFCHKAS. 5 cysteine pairs are disulfide-bonded: Cys-24-Cys-54, Cys-32-Cys-58, Cys-41-Cys-53, Cys-42-Cys-80, and Cys-47-Cys-62.

It belongs to the venom protein 11 family. 01 (wap-1) subfamily. Contains 5 disulfide bonds. In terms of tissue distribution, expressed by the venom gland.

It localises to the secreted. Functionally, has antibacterial activity. The chain is U14-lycotoxin-Ls1b from Lycosa singoriensis (Wolf spider).